The primary structure comprises 106 residues: uncharacterized protein (106 aa).

The protein belongs to the SUI1 family.

This is an uncharacterized protein from Haemophilus influenzae (strain ATCC 51907 / DSM 11121 / KW20 / Rd).